The following is a 509-amino-acid chain: Maturase K (509 aa).

This sequence belongs to the intron maturase 2 family. MatK subfamily.

Its subcellular location is the plastid. The protein resides in the chloroplast. Its function is as follows. Usually encoded in the trnK tRNA gene intron. Probably assists in splicing its own and other chloroplast group II introns. This chain is Maturase K, found in Jacaranda mimosifolia (Jacaranda).